The primary structure comprises 255 residues: 4-diphosphocytidyl-2-C-methyl-D-erythritol kinase (255 aa).

Lys6 is an active-site residue. Residue 95-105 (PVCAGLGGGSS) participates in ATP binding. Residue Asp137 is part of the active site.

It belongs to the GHMP kinase family. IspE subfamily.

The catalysed reaction is 4-CDP-2-C-methyl-D-erythritol + ATP = 4-CDP-2-C-methyl-D-erythritol 2-phosphate + ADP + H(+). Its pathway is isoprenoid biosynthesis; isopentenyl diphosphate biosynthesis via DXP pathway; isopentenyl diphosphate from 1-deoxy-D-xylulose 5-phosphate: step 3/6. Catalyzes the phosphorylation of the position 2 hydroxy group of 4-diphosphocytidyl-2C-methyl-D-erythritol. The sequence is that of 4-diphosphocytidyl-2-C-methyl-D-erythritol kinase from Campylobacter jejuni subsp. jejuni serotype O:2 (strain ATCC 700819 / NCTC 11168).